Reading from the N-terminus, the 240-residue chain is Protein unc-119 homolog A (240 aa).

A compositionally biased stretch (gly residues) spans 1–12; that stretch reads MKVKKGGGGAGT. The tract at residues 1-61 is disordered; it reads MKVKKGGGGA…GPLQRKQRIG (61 aa). Over residues 13-23 the composition is skewed to low complexity; the sequence is GAEPASGAPGP. A phosphoserine; by CK2 mark is found at serine 37, serine 39, and serine 41. Position 131 (tyrosine 131) interacts with tetradecanoate.

It belongs to the PDE6D/unc-119 family. In terms of assembly, interacts with CABP4; in the absence of calcium. May interact with GTP-bound ARL1. Interacts with ARL2 and ARL3 (GTP-bound forms); this promotes the release of myristoylated cargo proteins. Found in a complex with ARL3, RP2 and UNC119; RP2 induces hydrolysis of GTP ARL3 in the complex, leading to the release of UNC119. Interacts with NPHP3 (when myristoylated). Interacts with CYS1 (when myristoylated). Interacts with MACIR; interaction only takes place when UNC119 is not liganded with myristoylated proteins. Interacts with LCK; this interaction plays a crucial role in activation of LCK. Interacts with FYN. Interacts with RAB11A; in a cell cycle-dependent manner. Interacts with LYN (via SH2 and SH3 domains); leading to LYN activation. Interacts with DNM1; leading to a decrease of DNM1 GTPase activity. Found in a complex with ABL1, ABL2, CRK and UNC119; leading to the inhibition of CRK phosphorylation by ABL kinases. Interacts with CD44. Interacts with KLHL18 (via kelch repeats). Interacts with PPP3CA, PPP3CB and PPP3CC. Interacts with USP48; this interaction promotes UNC119 stability. Post-translationally, phosphorylation suppresses its interaction with KLHL18 and down-regulates its KLHL18-mediated degradation. Phosphorylated more under light conditions than dark conditions. Dephosphorylated by calcineurin.

Its subcellular location is the cytoplasm. The protein localises to the cytoskeleton. It is found in the microtubule organizing center. It localises to the centrosome. The protein resides in the spindle. Its subcellular location is the spindle pole. Involved in synaptic functions in photoreceptor cells, the signal transduction in immune cells as a Src family kinase activator, endosome recycling, the uptake of bacteria and endocytosis, protein trafficking in sensory neurons and as lipid-binding chaperone with specificity for a diverse subset of myristoylated proteins. Specifically binds the myristoyl moiety of a subset of N-terminally myristoylated proteins and is required for their localization. Binds myristoylated GNAT1 and is required for G-protein localization and trafficking in sensory neurons. Probably plays a role in trafficking proteins in photoreceptor cells. Plays important roles in mediating Src family kinase signals for the completion of cytokinesis via RAB11A. This is Protein unc-119 homolog A (UNC119) from Canis lupus familiaris (Dog).